The sequence spans 443 residues: Thymidine phosphorylase (443 aa).

Belongs to the thymidine/pyrimidine-nucleoside phosphorylase family. In terms of assembly, homodimer.

It catalyses the reaction thymidine + phosphate = 2-deoxy-alpha-D-ribose 1-phosphate + thymine. Its pathway is pyrimidine metabolism; dTMP biosynthesis via salvage pathway; dTMP from thymine: step 1/2. Its function is as follows. The enzymes which catalyze the reversible phosphorolysis of pyrimidine nucleosides are involved in the degradation of these compounds and in their utilization as carbon and energy sources, or in the rescue of pyrimidine bases for nucleotide synthesis. The polypeptide is Thymidine phosphorylase (Aliivibrio fischeri (strain ATCC 700601 / ES114) (Vibrio fischeri)).